The chain runs to 551 residues: Rqc2 homolog RqcH (551 aa).

The protein belongs to the NEMF family. As to quaternary structure, associates with stalled 50S ribosomal subunits, binds to RqcP. Interacts with human fibronectin.

It is found in the secreted. The protein resides in the capsule. It localises to the cell surface. Its subcellular location is the cytoplasm. In terms of biological role, key component of the ribosome quality control system (RQC), a ribosome-associated complex that mediates the extraction of incompletely synthesized nascent chains from stalled ribosomes and their subsequent degradation. RqcH recruits Ala-charged tRNA, and with RqcP directs the elongation of stalled nascent chains on 50S ribosomal subunits, leading to non-templated C-terminal alanine extensions (Ala tail). The Ala tail promotes nascent chain degradation. May add between 1 and at least 8 Ala residues. Binds to stalled 50S ribosomal subunits. Functionally, plays a significant role in virulence. Recombinant protein binds to immobilized human fibronectin; binding is saturable and competed by heparin. Purified protein inhibits binding of whole cells to fibronectin. In Streptococcus pneumoniae serotype 2 (strain D39 / NCTC 7466), this protein is Rqc2 homolog RqcH.